The chain runs to 414 residues: Methyl-CpG-binding domain protein 2 (414 aa).

Positions Met1 to Arg152 are required for interaction with DHX9 and PRMT5. Positions Met1–Lys163 are disordered. Residues Gly77–Gly95 are compositionally biased toward basic residues. A compositionally biased stretch (gly residues) spans Gln98 to Val123. Residues Glu148–Met216 enclose the MBD domain. Ser184 bears the Phosphoserine mark. The tract at residues Met217–Thr244 is disordered. The segment covering Pro232–Thr244 has biased composition (polar residues). Position 410 is a phosphoserine (Ser410).

In terms of assembly, heterodimer with MBD3 (via N-terminus). Component of the MeCP1 complex that contains HDAC1 and HDAC2. Component of the nucleosome remodeling and deacetylase (NuRD) repressor complex, composed of core proteins MTA1, MTA2, MTA3, RBBP4, RBBP7, HDAC1, HDAC2, MBD2, MBD3, and peripherally associated proteins CDK2AP1, CDK2AP2, GATAD2A, GATAD2B, CHD3, CHD4 and CHD5. The exact stoichiometry of the NuRD complex is unknown, and some subunits such as MBD2 and MBD3, GATAD2A and GATAD2B, and CHD3, CHD4 and CHD5 define mutually exclusive NuRD complexes. Interacts with CDK2AP1. Interacts with DHX9. Interacts with DNMT1. Interacts with GATAD2A/p66-alpha. Interacts with GATAD2B/p66-beta. Interacts with GPN1. Interacts with MIZF. Interacts with PRMT5. Interacts with SIN3A. Interacts with SPHK2. As to expression, highly expressed in brain, heart, kidney, lung, skeletal muscle, spleen and testis. Detected at lower levels in embryonic stem cells.

It localises to the nucleus. The protein resides in the chromosome. In terms of biological role, binds CpG islands in promoters where the DNA is methylated at position 5 of cytosine within CpG dinucleotides. Binds hemimethylated DNA as well. Recruits histone deacetylases and DNA methyltransferases to chromatin. Acts as a component of the histone deacetylase NuRD complex which participates in the remodeling of chromatin. Acts as transcriptional repressor and plays a role in gene silencing. Functions as a scaffold protein, targeting GATAD2A and GATAD2B to chromatin to promote repression. May enhance the activation of some unmethylated cAMP-responsive promoters. Selectively represses transcription activity of methylated rRNA promoters. This is Methyl-CpG-binding domain protein 2 from Mus musculus (Mouse).